Here is a 519-residue protein sequence, read N- to C-terminus: Protein disulfide-isomerase A5 (519 aa).

The signal sequence occupies residues 1-21 (MARAGPAWLLLAIWVVLPSWL). 4 disulfide bridges follow: Cys-85/Cys-94, Cys-182/Cys-185, Cys-305/Cys-308, and Cys-426/Cys-429. 3 Thioredoxin domains span residues 134–261 (FLKD…NPQP), 270–384 (PWAD…NPEA), and 378–506 (WMQN…ALRE). A Prevents secretion from ER motif is present at residues 516–519 (KEEL).

It belongs to the protein disulfide isomerase family. Interacts with CALR (via P-domain).

It localises to the endoplasmic reticulum lumen. The enzyme catalyses Catalyzes the rearrangement of -S-S- bonds in proteins.. The chain is Protein disulfide-isomerase A5 (PDIA5) from Homo sapiens (Human).